The following is a 93-amino-acid chain: UPF0058 protein AF_0738 (93 aa).

This sequence belongs to the UPF0058 family.

The chain is UPF0058 protein AF_0738 from Archaeoglobus fulgidus (strain ATCC 49558 / DSM 4304 / JCM 9628 / NBRC 100126 / VC-16).